The following is a 427-amino-acid chain: MAMKVTGGFILDENGEQVAKDVYIKDGKIVEHVADGDIRQQFDATGLLISPGFVDVHVHLREPGGEKKETIETGTKAAARGGFTTVAAMPNTRPVPDNAEQLDLLQARISETAVVRVLPYASITTRQLGQELTDFKALKEAGAFAFTDDGVGIQEAGMMLSAMKEAAALNMAVVAHCEDNSLINGGAVHEGHYAKAHGLNGIPSVCEAVHIARDVLLAEAAGAHYHVCHVSTKESVRTIRDAKKAGIRVTAEVTPHHLLLCEDDIIGKDPNFKMNPPLRAKEDRDALVAGLLDGTIDFIATDHAPHTAEEKSASLERAPFGIVGLETAFPLLYTHFVKPGTFTLKQLIDWLTVKPAQTFNLPYGTLQVGAAADLTLIDLKANETIDPSMFLSKGKNTPFAGWDCAGIPQATMVAGKTVYKKERITNE.

Positions 57 and 59 each coordinate Zn(2+). Substrate contacts are provided by residues 59–61 (HLR) and N91. The Zn(2+) site is built by D149, H176, and H229. N275 serves as a coordination point for substrate. A Zn(2+)-binding site is contributed by D302. The active site involves D302. Substrate is bound by residues H306 and 320-321 (FG).

It belongs to the metallo-dependent hydrolases superfamily. DHOase family. Class I DHOase subfamily. Zn(2+) serves as cofactor.

The enzyme catalyses (S)-dihydroorotate + H2O = N-carbamoyl-L-aspartate + H(+). It participates in pyrimidine metabolism; UMP biosynthesis via de novo pathway; (S)-dihydroorotate from bicarbonate: step 3/3. In terms of biological role, catalyzes the reversible cyclization of carbamoyl aspartate to dihydroorotate. The polypeptide is Dihydroorotase (Shouchella clausii (strain KSM-K16) (Alkalihalobacillus clausii)).